The primary structure comprises 119 residues: MARFVAVALLVLLSLSGLEAIQHAPKIQVYSRHPAENGKPNFLNCYVSGFHPSDIEVDLLKNGKKIEKVEHSDLSFSKDWSFYLLYYTEFTPNDKDEYACRVSHVTFSTPKTVKWDRNM.

A signal peptide spans 1–20 (MARFVAVALLVLLSLSGLEA). Residues 25-114 (PKIQVYSRHP…VTFSTPKTVK (90 aa)) enclose the Ig-like C1-type domain. A disulfide bridge connects residues Cys45 and Cys100.

The protein belongs to the beta-2-microglobulin family. Heterodimer of an alpha chain and a beta chain. Beta-2-microglobulin is the beta-chain of major histocompatibility complex class I molecules.

It is found in the secreted. Component of the class I major histocompatibility complex (MHC). Involved in the presentation of peptide antigens to the immune system. In Plecturocebus moloch (Dusky titi monkey), this protein is Beta-2-microglobulin (B2M).